Reading from the N-terminus, the 719-residue chain is Translation factor guf1, mitochondrial (719 aa).

Residues 1–75 (MRGALCRPDV…TRCFSALRSL (75 aa)) constitute a mitochondrion transit peptide. The tr-type G domain maps to 119-301 (ERYRNFCIVA…AVISNVPAPV (183 aa)). GTP is bound by residues 128–135 (AHIDHGKS), 194–198 (DTPGH), and 248–251 (NKID).

It belongs to the TRAFAC class translation factor GTPase superfamily. Classic translation factor GTPase family. LepA subfamily.

It localises to the mitochondrion inner membrane. The catalysed reaction is GTP + H2O = GDP + phosphate + H(+). In terms of biological role, promotes mitochondrial protein synthesis. May act as a fidelity factor of the translation reaction, by catalyzing a one-codon backward translocation of tRNAs on improperly translocated ribosomes. Binds to mitochondrial ribosomes in a GTP-dependent manner. In Neurospora crassa (strain ATCC 24698 / 74-OR23-1A / CBS 708.71 / DSM 1257 / FGSC 987), this protein is Translation factor guf1, mitochondrial (guf1).